The primary structure comprises 553 residues: Undecaprenyl phosphate-alpha-4-amino-4-deoxy-L-arabinose arabinosyl transferase (553 aa).

11 consecutive transmembrane segments (helical) span residues 6 to 26 (ACKV…LLPL), 89 to 109 (FGSV…AMMM), 115 to 135 (IAFA…IGTY), 180 to 200 (FMTK…PIVI), 208 to 228 (IVCF…PWVI), 258 to 278 (IAPF…WLGL), 293 to 313 (NPEM…FSIA), 317 to 337 (LPTY…KFGV), 352 to 372 (GMVN…MEVV), 386 to 406 (WVLA…CFAL), and 410 to 430 (YWLL…HALP).

Belongs to the glycosyltransferase 83 family.

The protein localises to the cell inner membrane. The enzyme catalyses 4-amino-4-deoxy-alpha-L-arabinopyranosyl di-trans,octa-cis-undecaprenyl phosphate + lipid IVA = lipid IIA + di-trans,octa-cis-undecaprenyl phosphate.. It functions in the pathway lipopolysaccharide metabolism; 4-amino-4-deoxy-beta-L-arabinose-lipid A biosynthesis. Catalyzes the transfer of the L-Ara4N moiety of the glycolipid undecaprenyl phosphate-alpha-L-Ara4N to lipid A. The modified arabinose is attached to lipid A and is required for resistance to polymyxin and cationic antimicrobial peptides. The polypeptide is Undecaprenyl phosphate-alpha-4-amino-4-deoxy-L-arabinose arabinosyl transferase (arnT) (Photorhabdus laumondii subsp. laumondii (strain DSM 15139 / CIP 105565 / TT01) (Photorhabdus luminescens subsp. laumondii)).